Reading from the N-terminus, the 205-residue chain is Dephospho-CoA kinase (205 aa).

The DPCK domain maps to 4 to 203 (KIGITGGIGS…QKIHYLCSAK (200 aa)). 12-17 (GSGKSV) serves as a coordination point for ATP.

This sequence belongs to the CoaE family.

It is found in the cytoplasm. It carries out the reaction 3'-dephospho-CoA + ATP = ADP + CoA + H(+). The protein operates within cofactor biosynthesis; coenzyme A biosynthesis; CoA from (R)-pantothenate: step 5/5. Functionally, catalyzes the phosphorylation of the 3'-hydroxyl group of dephosphocoenzyme A to form coenzyme A. This is Dephospho-CoA kinase from Bacteroides fragilis (strain ATCC 25285 / DSM 2151 / CCUG 4856 / JCM 11019 / LMG 10263 / NCTC 9343 / Onslow / VPI 2553 / EN-2).